The primary structure comprises 185 residues: Adenine phosphoribosyltransferase (185 aa).

This sequence belongs to the purine/pyrimidine phosphoribosyltransferase family. As to quaternary structure, homodimer.

The protein resides in the cytoplasm. It catalyses the reaction AMP + diphosphate = 5-phospho-alpha-D-ribose 1-diphosphate + adenine. It functions in the pathway purine metabolism; AMP biosynthesis via salvage pathway; AMP from adenine: step 1/1. In terms of biological role, catalyzes a salvage reaction resulting in the formation of AMP, that is energically less costly than de novo synthesis. This is Adenine phosphoribosyltransferase from Pectobacterium carotovorum subsp. carotovorum (strain PC1).